The sequence spans 90 residues: Co-chaperonin GroES (90 aa).

This sequence belongs to the GroES chaperonin family. In terms of assembly, heptamer of 7 subunits arranged in a ring. Interacts with the chaperonin GroEL.

The protein resides in the cytoplasm. Functionally, together with the chaperonin GroEL, plays an essential role in assisting protein folding. The GroEL-GroES system forms a nano-cage that allows encapsulation of the non-native substrate proteins and provides a physical environment optimized to promote and accelerate protein folding. GroES binds to the apical surface of the GroEL ring, thereby capping the opening of the GroEL channel. This is Co-chaperonin GroES from Bacteroides thetaiotaomicron (strain ATCC 29148 / DSM 2079 / JCM 5827 / CCUG 10774 / NCTC 10582 / VPI-5482 / E50).